The sequence spans 303 residues: PDRRPPEDPITPPPPTKEEQRAGCGWRNENGVGFRIIGDKDGEAKFGEFPWMVAILKIEPVNDQDPEGQKLNVYVGGGSLIHPQVVLTAAHYVATAKTLRVRAGEWDTQTTKEIYPYQDRDVTHKEIHKDFNKGNLFYDIALLFLSQPMEMAPNVGVVCLPPRNERAEAGTRCFASGWGKDKFGKEGRYQVILKKVEVPVVDRNTCQDQLRKTRLGRHFMLHSSFMCAGGEPGRDTCRGDGGSPLVCPIQYEKGRYVQSGIVAWGIGCGEDRTPGVYVDVGNLRDWIDDKVAGRGIEPTVYTY.

The interval 1–24 (PDRRPPEDPITPPPPTKEEQRAGC) is disordered. A Peptidase S1 domain is found at 36–292 (IIGDKDGEAK…LRDWIDDKVA (257 aa)). Cystine bridges form between Cys-173–Cys-247, Cys-206–Cys-227, and Cys-237–Cys-268.

Belongs to the peptidase S1 family. In terms of assembly, heterodimer.

It localises to the secreted. Its function is as follows. Binds and activates processed prophenoloxidases PPO1 and PPO2 and thus is involved in the activation of the prophenoloxidase cascade probably following the recognition of pathogen-derived products. Binds the A.niger cell wall component alpha-1,3-glucan, a fungal pathogen-associated molecular pattern (PAMP) that activates the host immune response. The chain is Phenoloxidase-activating factor 2 (LOC113510063) from Galleria mellonella (Greater wax moth).